The following is a 283-amino-acid chain: Eukaryotic translation initiation factor 3 subunit K (283 aa).

A PCI domain is found at 52–263 (YDLLANLAIL…EIKATVIREE (212 aa)). The interval 114–135 (EATTTDADNAGSLSGDDDDDEV) is disordered.

Belongs to the eIF-3 subunit K family. Component of the eukaryotic translation initiation factor 3 (eIF-3) complex.

The protein resides in the cytoplasm. Functionally, component of the eukaryotic translation initiation factor 3 (eIF-3) complex, which is involved in protein synthesis of a specialized repertoire of mRNAs and, together with other initiation factors, stimulates binding of mRNA and methionyl-tRNAi to the 40S ribosome. The eIF-3 complex specifically targets and initiates translation of a subset of mRNAs involved in cell proliferation. The sequence is that of Eukaryotic translation initiation factor 3 subunit K from Mycosarcoma maydis (Corn smut fungus).